A 238-amino-acid chain; its full sequence is N-methyltransferase vrtF (238 aa).

It belongs to the methyltransferase superfamily.

It functions in the pathway secondary metabolite biosynthesis; terpenoid biosynthesis. In terms of biological role, N-methyltransferase; part of the gene cluster that mediates the biosynthesis of viridicatumtoxin, a tetracycline-like fungal meroterpenoid with a unique, fused spirobicyclic ring system. The first step of the pathway is the production of the malonamoyl-CoA starter unit for the polyketide synthase vrtA. The aldolase vrtJ may be involved in the synthesis of the malonamate substrate for malonamoyl-CoA synthetase vrtB. The polyketide synthase vrtA then may utilize the malonamoyl-CoA starter unit, followed by sequential condensation of eight malonyl-CoA units to form the polyketide backbone. The cyclization of the last ring could be mediated by the lactamase-like protein vrtG. The proposed post-PKS tailoring steps are a hydroxylation at C5 catalyzed the cytochrome P450 monooxygenase vrtE, a hydroxylation at C12a catalyzed by VrtH and/or VrtI, and an O-methylation by the O-methyltransferase vrtF. VrtC is then proposed to catalyze the transfer of a geranyl group synthesized by vrtD to the aromatic C ring of the tetracyclic polyketide intermediate of viridicatumtoxin to yield previridicatumtoxin. Finally, the cytochrome P450 monooxygenase vrtK catalyzes the spirocyclization of the geranyl moiety of previridicatumtoxin to afford viridicatumtoxin. In Penicillium aethiopicum, this protein is N-methyltransferase vrtF.